The chain runs to 127 residues: Histone H2B.2 (127 aa).

Residues 1 to 35 (MAPKAEKKPASKAPAAKKTTASTDASKKRTKTRKE) are disordered. Residues lysine 7 and lysine 8 each carry the N6-acetyllysine; alternate modification. Residues lysine 7 and lysine 8 each participate in a glycyl lysine isopeptide (Lys-Gly) (interchain with G-Cter in SUMO); alternate cross-link. The residue at position 11 (serine 11) is a Phosphoserine. Over residues 11–24 (SKAPAAKKTTASTD) the composition is skewed to low complexity. Lysine 12 bears the N6-acetyllysine mark. Lysine 120 is covalently cross-linked (Glycyl lysine isopeptide (Lys-Gly) (interchain with G-Cter in ubiquitin)).

Belongs to the histone H2B family. The nucleosome is a histone octamer containing two molecules each of H2A, H2B, H3 and H4 assembled in one H3-H4 heterotetramer and two H2A-H2B heterodimers. The octamer wraps approximately 147 bp of DNA. Monoubiquitinated by the UBC2-BRE1 complex to form H2BK123ub1. H2BK123ub1 gives a specific tag for epigenetic transcriptional activation and is also prerequisite for H3K4me and H3K79me formation. H2BK123ub1 also modulates the formation of double-strand breaks during meiosis and is a prerequisite for DNA-damage checkpoint activation. In terms of processing, phosphorylated by STE20 to form H2BS10ph during progression through meiotic prophase. May be correlated with chromosome condensation. Post-translationally, acetylation of N-terminal lysines and particularly formation of H2BK11ac has a positive effect on transcription. Sumoylation to form H2BK6su or H2BK7su occurs preferentially near the telomeres and represses gene transcription.

It localises to the nucleus. It is found in the chromosome. Functionally, core component of nucleosome. Nucleosomes wrap and compact DNA into chromatin, limiting DNA accessibility to the cellular machineries which require DNA as a template. Histones thereby play a central role in transcription regulation, DNA repair, DNA replication and chromosomal stability. DNA accessibility is regulated via a complex set of post-translational modifications of histones, also called histone code, and nucleosome remodeling. This is Histone H2B.2 (HTB2) from Eremothecium gossypii (strain ATCC 10895 / CBS 109.51 / FGSC 9923 / NRRL Y-1056) (Yeast).